We begin with the raw amino-acid sequence, 693 residues long: Golgin subfamily A member 6D (693 aa).

The stretch at 14–611 forms a coiled coil; the sequence is LEESRQNKLA…KLLELQELVL (598 aa). 3 disordered regions span residues 20–70, 497–547, and 662–693; these read NKLA…GDSQ, LPGE…GTEQ, and VEPAPGVAREGSPHNNPTVQQIVQLSPVMQDT. A compositionally biased stretch (basic and acidic residues) spans 537 to 547; sequence LPKEKADGTEQ. Residues 674-693 show a composition bias toward polar residues; it reads PHNNPTVQQIVQLSPVMQDT.

This sequence belongs to the GOLGA6 family.

This Homo sapiens (Human) protein is Golgin subfamily A member 6D (GOLGA6D).